Here is a 627-residue protein sequence, read N- to C-terminus: DNA topoisomerase 4 subunit B (627 aa).

ATP contacts are provided by residues Y4, N41, D68, 109-115 (GLHGVGV), and K333. The region spanning 412–525 (TELFIVEGDS…NGHIYIAQPP (114 aa)) is the Toprim domain. Residues E418, D490, and D492 each coordinate Mg(2+).

This sequence belongs to the type II topoisomerase family. ParE type 1 subfamily. As to quaternary structure, heterotetramer composed of ParC and ParE. It depends on Mg(2+) as a cofactor. Mn(2+) is required as a cofactor. Requires Ca(2+) as cofactor.

The catalysed reaction is ATP-dependent breakage, passage and rejoining of double-stranded DNA.. With respect to regulation, pyrrolopyrimidines inhibit both GyrB and its paralog in topoisomerase IV (parE). Its function is as follows. Topoisomerase IV is essential for chromosome segregation. It relaxes supercoiled DNA. Performs the decatenation events required during the replication of a circular DNA molecule. The polypeptide is DNA topoisomerase 4 subunit B (Francisella tularensis subsp. holarctica (strain LVS)).